A 289-amino-acid polypeptide reads, in one-letter code: Palmitoyl-protein thioesterase 3 (289 aa).

Residues 1–20 form the signal peptide; it reads MRILSSLILLIALAIALVSA. Serine 97 is a catalytic residue. Asparagine 189 and asparagine 195 each carry an N-linked (GlcNAc...) asparagine glycan. Residues aspartate 210 and histidine 266 contribute to the active site. Asparagine 281 is a glycosylation site (N-linked (GlcNAc...) asparagine).

Belongs to the palmitoyl-protein thioesterase family.

The protein localises to the lysosome. It carries out the reaction S-hexadecanoyl-L-cysteinyl-[protein] + H2O = L-cysteinyl-[protein] + hexadecanoate + H(+). In terms of biological role, removes thioester-linked fatty acyl groups such as palmitate from modified cysteine residues in proteins or peptides during lysosomal degradation. This Dictyostelium discoideum (Social amoeba) protein is Palmitoyl-protein thioesterase 3 (ppt3).